A 1578-amino-acid polypeptide reads, in one-letter code: Formin-2 (1578 aa).

Basic and acidic residues-rich tracts occupy residues 1–17 (MGNQ…DASH), 26–35 (AGPRDAEITK), and 57–66 (TSKKKSKSDS). Residues 1–73 (MGNQDGKLKR…SDSRASVFSN (73 aa)) form a disordered region. Ser89 bears the Phosphoserine mark. Disordered regions lie at residues 208–230 (KLLL…QPGA), 244–383 (EAEK…PSPR), and 401–458 (RQLS…GLSR). Polar residues-rich tracts occupy residues 273–282 (SSGSHLTSET) and 290–300 (SAVTDSLSSPA). The span at 322 to 333 (DTDEECEEDAFE) shows a compositional bias: acidic residues. Residues 351 to 364 (ASQRLEKEPEEGMR) are compositionally biased toward basic and acidic residues. Low complexity-rich tracts occupy residues 404 to 418 (SSPN…NQSP) and 427 to 442 (SVSR…AAAP). Ser459, Ser489, and Ser493 each carry phosphoserine. Positions 587–634 (SMDYSEGQFPRREPSMWPSSKLPEEEPSPKDVDTEPKSSILESPKKCS) are disordered. The span at 608–622 (LPEEEPSPKDVDTEP) shows a compositional bias: basic and acidic residues. Residues 643 to 683 (DVKSEGQATVIQQLEQTIEDLRTKIAELEKQYPALDLEGPR) are a coiled coil. Disordered stretches follow at residues 714–765 (RTLE…SGPQ), 786–836 (DAQQ…GNNC), and 880–944 (PALQ…MGIS). In terms of domain architecture, FH1 spans 735-1124 (PPPKAPPEGL…GCGFLFPPLP (390 aa)). Residues 786–795 (DAQQIQSASQ) show a composition bias toward polar residues. Over residues 803–817 (LGSDSQGQPSQPSLH) the composition is skewed to low complexity. Basic and acidic residues predominate over residues 818-827 (TESETSHEHS). Over residues 893–944 (LPAPPQPPPLPGLGVPPPPPAPPLPGMGIPPPPPLPGMGIPPPPPLPGMGIS) the composition is skewed to pro residues. 12 repeat units span residues 919–929 (MGIPPPPPLPG), 930–940 (MGIPPPPPLPG), 941–951 (MGISPLPPLPG), 952–962 (MGIPPPPPLPG), 963–973 (VGIPPPPPLPG), 974–984 (VGIPPPPPLPG), 985–995 (VGIPPPPPLPG), 996–1006 (VGIPPPPPLPG), 1007–1017 (VGIPPPPPLPG), 1018–1028 (VGIPPPPPLPG), 1029–1039 (VGIPPPPPLPG), and 1040–1050 (VGIPPPPPLPG). The segment at 919–1039 (MGIPPPPPLP…GIPPPPPLPG (121 aa)) is 12 X 11 AA tandem repeats of [MV]-G-I-P-P-P-P-P-L-P-G. The segment covering 1037 to 1097 (LPGVGIPPPP…PPPPLLPGSG (61 aa)) has biased composition (pro residues). Residues 1037–1108 (LPGVGIPPPP…PHSSQVGSST (72 aa)) are disordered. One can recognise an FH2 domain in the interval 1139 to 1554 (RKQLIEPCRP…KEAEEVCRQK (416 aa)). The stretch at 1419–1455 (QELFQASQMKFEDFQKDLRKLKKDLKACEAEAGKVYQ) forms a coiled coil. Residues 1571–1578 (KAKISMKT) form an important for interaction with SPIRE1 region.

This sequence belongs to the formin homology family. Cappuccino subfamily. As to quaternary structure, interacts with SPIRE1. Binds actin. Interacts with CDKN1A. Detected in brain and in oocytes (at protein level). Expressed almost exclusively in the developing and mature central nervous system. Detected in oocytes.

It is found in the cytoplasm. It localises to the cytoskeleton. Its subcellular location is the cytosol. The protein resides in the perinuclear region. The protein localises to the nucleus. It is found in the nucleolus. It localises to the cell membrane. Its subcellular location is the cell cortex. The protein resides in the cytoplasmic vesicle membrane. Functionally, actin-binding protein that is involved in actin cytoskeleton assembly and reorganization. Acts as an actin nucleation factor and promotes assembly of actin filaments together with SPIRE1 and SPIRE2. Involved in intracellular vesicle transport along actin fibers, providing a novel link between actin cytoskeleton dynamics and intracellular transport. Required for asymmetric spindle positioning, asymmetric oocyte division and polar body extrusion during female germ cell meiosis. Plays a role in responses to DNA damage, cellular stress and hypoxia by protecting CDKN1A against degradation, and thereby plays a role in stress-induced cell cycle arrest. Also acts in the nucleus: together with SPIRE1 and SPIRE2, promotes assembly of nuclear actin filaments in response to DNA damage in order to facilitate movement of chromatin and repair factors after DNA damage. Protects cells against apoptosis by protecting CDKN1A against degradation. The polypeptide is Formin-2 (Fmn2) (Mus musculus (Mouse)).